Consider the following 604-residue polypeptide: Solute carrier family 23 member 1 (604 aa).

Residues 1–29 are disordered; it reads MKAQEDPGSSKQHECPDSAGTSTRDQQAP. At 1-59 the chain is on the cytoplasmic side; sequence MKAQEDPGSSKQHECPDSAGTSTRDQQAPLPAEPKFDMLYKIEDVPPWYLCILLGFQHY. A helical transmembrane segment spans residues 60-80; the sequence is LTCFSGTIAVPFLLAEALCVG. At 81–88 the chain is on the extracellular side; sequence RDQHMISQ. A helical transmembrane segment spans residues 89–109; the sequence is LIGTIFTCVGITTLIQTTVGI. A topological domain (cytoplasmic) is located at residue Arg-110. The chain crosses the membrane as a helical span at residues 111–131; the sequence is LPLFQASAFAFLVPAKAILAL. The Extracellular portion of the chain corresponds to 132 to 166; that stretch reads ERWKCPPEEEIYGNWSMPLNTSHIWHPRIREVQGA. N-linked (GlcNAc...) asparagine glycosylation is found at Asn-145 and Asn-151. Residues 167–187 traverse the membrane as a helical segment; the sequence is IMVSSVVEVVIGLLGLPGALL. Residues 188–214 lie on the Cytoplasmic side of the membrane; it reads SYIGPLTVTPTVSLIGLSVFQAAGDRA. Residues 215–232 traverse the membrane as a helical segment; sequence GSHWGISACSILLIVLFS. The Extracellular portion of the chain corresponds to 233–236; it reads QYLR. Residues 237 to 250 constitute an intramembrane region (helical); that stretch reads NLTFLLPVYRWGKG. Residues 251–257 are Extracellular-facing; it reads LTLFRIQ. The helical transmembrane segment at 258 to 278 threads the bilayer; sequence IFKMFPIVLAIMTVWLLCYVL. The Cytoplasmic segment spans residues 279 to 319; sequence TLTDVLPADPTVYGFQARTDARGDIMAISPWIRIPYPCQWG. Residues 320–340 form a helical membrane-spanning segment; sequence LPTVTVAAVLGMFSATLAGII. Topologically, residues 341–365 are extracellular; the sequence is ESIGDYYACARLAGAPPPPVHAINR. A helical membrane pass occupies residues 366–386; the sequence is GIFTEGVCCIIAGLLGTGNGS. Residues 387–409 are Cytoplasmic-facing; the sequence is TSSSPNIGVLGITKVGSRRVVQY. A helical transmembrane segment spans residues 410–430; sequence GAGIMLILGAIGKFTALFASL. The Extracellular portion of the chain corresponds to 431–433; sequence PDP. Residues 434-454 form a helical membrane-spanning segment; the sequence is ILGGMFCTLFGMITAVGLSNL. Residues 455-464 are Cytoplasmic-facing; sequence QFVDMNSSRN. The chain crosses the membrane as a helical span at residues 465–485; the sequence is LFVLGFSMFFGLTLPNYLDSN. Topologically, residues 486–497 are extracellular; it reads PGAINTGVPEVD. The chain crosses the membrane as a helical span at residues 498 to 518; that stretch reads QILTVLLTTEMFVGGCLAFIL. The Cytoplasmic portion of the chain corresponds to 519–604; sequence DNTVPGSPEE…TETGSVCTKV (86 aa). At Thr-597 the chain carries Phosphothreonine. Phosphoserine is present on Ser-599. Thr-602 is modified (phosphothreonine).

The protein belongs to the nucleobase:cation symporter-2 (NCS2) (TC 2.A.40) family. In terms of processing, phosphorylated. As to expression, highly expressed in the straight segment of proximal tubules in the kidney, in intestine and liver. Detected in epithelial cells of the bronchiole and epididymis.

The protein localises to the cell membrane. The enzyme catalyses L-ascorbate(out) + 2 Na(+)(out) = L-ascorbate(in) + 2 Na(+)(in). It carries out the reaction urate(out) + 2 Na(+)(out) = urate(in) + 2 Na(+)(in). Functionally, sodium/ascorbate cotransporter. Mediates electrogenic uptake of vitamin C, with a stoichiometry of 2 Na(+) for each ascorbate. Has retained some ancestral activity toward nucleobases such as urate, an oxidized purine. Low-affinity high-capacity sodium:urate cotransporter, may regulate serum urate levels by serving as a renal urate re-absorber. The polypeptide is Solute carrier family 23 member 1 (Slc23a1) (Rattus norvegicus (Rat)).